We begin with the raw amino-acid sequence, 128 residues long: Sulfurtransferase TusD (128 aa).

The active-site Cysteine persulfide intermediate is the Cys78.

The protein belongs to the DsrE/TusD family. As to quaternary structure, heterohexamer, formed by a dimer of trimers. The hexameric TusBCD complex contains 2 copies each of TusB, TusC and TusD. The TusBCD complex interacts with TusE.

It localises to the cytoplasm. Part of a sulfur-relay system required for 2-thiolation of 5-methylaminomethyl-2-thiouridine (mnm(5)s(2)U) at tRNA wobble positions. Accepts sulfur from TusA and transfers it in turn to TusE. The chain is Sulfurtransferase TusD from Salmonella arizonae (strain ATCC BAA-731 / CDC346-86 / RSK2980).